Here is a 104-residue protein sequence, read N- to C-terminus: Large ribosomal subunit protein uL24 (104 aa).

The protein belongs to the universal ribosomal protein uL24 family. Part of the 50S ribosomal subunit.

In terms of biological role, one of two assembly initiator proteins, it binds directly to the 5'-end of the 23S rRNA, where it nucleates assembly of the 50S subunit. Functionally, one of the proteins that surrounds the polypeptide exit tunnel on the outside of the subunit. In Pectobacterium atrosepticum (strain SCRI 1043 / ATCC BAA-672) (Erwinia carotovora subsp. atroseptica), this protein is Large ribosomal subunit protein uL24.